The following is a 422-amino-acid chain: UDP-N-acetylglucosamine 1-carboxyvinyltransferase (422 aa).

22-23 (KN) is a binding site for phosphoenolpyruvate. Residue Arg-93 coordinates UDP-N-acetyl-alpha-D-glucosamine. Catalysis depends on Cys-117, which acts as the Proton donor. At Cys-117 the chain carries 2-(S-cysteinyl)pyruvic acid O-phosphothioketal. UDP-N-acetyl-alpha-D-glucosamine-binding positions include 122–126 (RPVDL), Asp-308, and Leu-330.

Belongs to the EPSP synthase family. MurA subfamily.

It is found in the cytoplasm. The catalysed reaction is phosphoenolpyruvate + UDP-N-acetyl-alpha-D-glucosamine = UDP-N-acetyl-3-O-(1-carboxyvinyl)-alpha-D-glucosamine + phosphate. The protein operates within cell wall biogenesis; peptidoglycan biosynthesis. Functionally, cell wall formation. Adds enolpyruvyl to UDP-N-acetylglucosamine. In Helicobacter pylori (strain ATCC 700392 / 26695) (Campylobacter pylori), this protein is UDP-N-acetylglucosamine 1-carboxyvinyltransferase.